A 222-amino-acid chain; its full sequence is Ras-related protein RabT1 (222 aa).

37-44 contributes to the GTP binding site; it reads GDNKTGKS. An Effector region motif is present at residues 59 to 66; sequence VSSIGVDF. GTP contacts are provided by residues 85-89 and 145-148; these read DVNSC and NKCD. Cysteine 219 is modified (cysteine methyl ester). Residue cysteine 219 is the site of S-geranylgeranyl cysteine attachment. Residues 220–222 constitute a propeptide, removed in mature form; that stretch reads NIL.

This sequence belongs to the small GTPase superfamily. Rab family.

Its subcellular location is the cell membrane. The chain is Ras-related protein RabT1 (rabT1) from Dictyostelium discoideum (Social amoeba).